Reading from the N-terminus, the 330-residue chain is MKLKVFNVREEEATLAQDWANRNHVELSMSEGPLTLETVNEVEGFDGIANAQIGPLDDAIYPLLKEMGIKQIAQRSAGVDMYNLELAKQHGIIISNVPSYSPESIAEFTVTIALNLIRKVELIRANVREQNFSWTLPIRGRVLGNMTVAIIGTGRIGLATAKIFKGFGCRVIGYDIYHNPMADGILEYVNSVEEAVEKADLVSLHMPPTAENTHLFNLDMFKQFKKGAILMNMARGALVETKDLLEALDQGLLEGAGIDTYEFEGPYIPKNCQGQDISDKDFLRLINHPKVIYTPHAAYYTDEAVKNLVEGALNACVEVVETGTTTTRVN.

NAD(+) contacts are provided by residues 155-156 (RI), Asp-175, 206-207 (MP), Asn-212, 233-235 (MAR), and Asp-259. Arg-235 is an active-site residue. Glu-264 is an active-site residue. The active-site Proton donor is His-296.

It belongs to the D-isomer specific 2-hydroxyacid dehydrogenase family.

It catalyses the reaction (R)-lactate + NAD(+) = pyruvate + NADH + H(+). This chain is D-lactate dehydrogenase (ldhD), found in Streptococcus agalactiae serotype III (strain NEM316).